The following is a 225-amino-acid chain: C-reactive protein (225 aa).

The N-terminal stretch at 1–19 is a signal peptide; that stretch reads MAKLLLYFLLLTSLSDVFG. Residues 24-225 form the Pentraxin (PTX) domain; the sequence is SKKTFVFPKE…EVFIKPQLWP (202 aa). Cysteine 55 and cysteine 116 are joined by a disulfide. Positions 80, 158, 159, and 169 each coordinate Ca(2+).

The protein belongs to the pentraxin family. In terms of assembly, homopentamer. Pentraxin (or pentaxin) have a discoid arrangement of 5 non-covalently bound subunits. Interacts with FCN1; may regulate monocyte activation by FCN1. Requires Ca(2+) as cofactor. Found in plasma.

It is found in the secreted. Functionally, displays several functions associated with host defense: it promotes agglutination, bacterial capsular swelling, phagocytosis and complement fixation through its calcium-dependent binding to phosphorylcholine. Can interact with DNA and histones and may scavenge nuclear material released from damaged circulating cells. In Cavia porcellus (Guinea pig), this protein is C-reactive protein (CRP).